A 327-amino-acid chain; its full sequence is Ankyrin repeat domain-containing protein SOWAHD (327 aa).

Residues 1 to 31 (MAQALEDGNPLPKASNRPAESEAPSDPQIKD) are disordered. ANK repeat units lie at residues 112 to 141 (CLEPREHAWILAAAECRFEVLLEMLEAEPS), 147 to 162 (DPITGYSVLHWLAKHG), and 186 to 216 (PGSGGLTPLHLAALQGHDMVIKVLVGALGAD). The segment at 251–311 (ERDRKRENAN…EKKASSTQEG (61 aa)) is disordered. A compositionally biased stretch (low complexity) spans 260 to 275 (NNNSSRTTTTTTTTSR). Basic and acidic residues predominate over residues 292–305 (HYKEASQPVKEKKA).

Belongs to the SOWAH family.

In Mus musculus (Mouse), this protein is Ankyrin repeat domain-containing protein SOWAHD (Sowahd).